Here is a 555-residue protein sequence, read N- to C-terminus: T-complex protein 1 subunit eta (555 aa).

The protein belongs to the TCP-1 chaperonin family. Heterooligomeric complex of about 850 to 900 kDa that forms two stacked rings, 12 to 16 nm in diameter.

It localises to the cytoplasm. In terms of biological role, molecular chaperone; assists the folding of proteins upon ATP hydrolysis. Known to play a role, in vitro, in the folding of actin and tubulin. In Dictyostelium discoideum (Social amoeba), this protein is T-complex protein 1 subunit eta (cct7).